Reading from the N-terminus, the 121-residue chain is Large ribosomal subunit protein bL12 (121 aa).

This sequence belongs to the bacterial ribosomal protein bL12 family. In terms of assembly, homodimer. Part of the ribosomal stalk of the 50S ribosomal subunit. Forms a multimeric L10(L12)X complex, where L10 forms an elongated spine to which 2 to 4 L12 dimers bind in a sequential fashion. Binds GTP-bound translation factors.

Forms part of the ribosomal stalk which helps the ribosome interact with GTP-bound translation factors. Is thus essential for accurate translation. The protein is Large ribosomal subunit protein bL12 of Clostridium perfringens (strain ATCC 13124 / DSM 756 / JCM 1290 / NCIMB 6125 / NCTC 8237 / Type A).